Consider the following 408-residue polypeptide: 3-ketoacyl-CoA thiolase A, peroxisomal (408 aa).

Catalysis depends on Cys-112, which acts as the Acyl-thioester intermediate. Active-site proton acceptor residues include His-366 and Cys-394.

Belongs to the thiolase-like superfamily. Thiolase family. In terms of assembly, homodimer.

The protein resides in the peroxisome. It carries out the reaction an acyl-CoA + acetyl-CoA = a 3-oxoacyl-CoA + CoA. The protein operates within lipid metabolism; fatty acid metabolism. This Candida tropicalis (Yeast) protein is 3-ketoacyl-CoA thiolase A, peroxisomal.